We begin with the raw amino-acid sequence, 171 residues long: PIDD1 alternative open reading frame protein (171 aa).

Disordered regions lie at residues 1 to 22 and 76 to 156; these read MSGL…RAGG and ILAS…LCPA. Residues 84-99 are compositionally biased toward low complexity; that stretch reads GPSAAGGHPGPAASEP.

As to quaternary structure, interacts with calpain-2 catalytic subunit CAPN2. In terms of processing, cleaved in vitro following UV irradiation to induce caspase-mediated apoptosis and this cleavage is inhibited by a broad-spectrum caspase inhibitor.

It is found in the cytoplasm. Its subcellular location is the cytoskeleton. The chain is PIDD1 alternative open reading frame protein from Homo sapiens (Human).